The following is a 227-amino-acid chain: Small ribosomal subunit protein uS3 (227 aa).

A KH type-2 domain is found at 39–108 (IRKFIEERYK…EVIVNVDEVK (70 aa)).

This sequence belongs to the universal ribosomal protein uS3 family. As to quaternary structure, part of the 30S ribosomal subunit. Forms a tight complex with proteins S10 and S14.

Binds the lower part of the 30S subunit head. Binds mRNA in the 70S ribosome, positioning it for translation. The protein is Small ribosomal subunit protein uS3 of Sulfurihydrogenibium sp. (strain YO3AOP1).